Reading from the N-terminus, the 211-residue chain is Small ribosomal subunit protein uS3 (211 aa).

Residues 16–85 (IDEYFKTKLV…NPQIEVKQVE (70 aa)) form the KH type-2 domain.

Belongs to the universal ribosomal protein uS3 family. As to quaternary structure, part of the 30S ribosomal subunit.

Functionally, binds the lower part of the 30S subunit head. The protein is Small ribosomal subunit protein uS3 of Methanococcus maripaludis (strain C7 / ATCC BAA-1331).